Reading from the N-terminus, the 536-residue chain is CTP synthase (536 aa).

The amidoligase domain stretch occupies residues 1-267 (MSKFVFVTGG…CKETLKYLDL (267 aa)). Ser13 is a binding site for CTP. Ser13 is a UTP binding site. ATP-binding positions include 14–19 (SIGKGI) and Asp71. Asp71 and Glu141 together coordinate Mg(2+). Residues 148–150 (DIE), 188–193 (KTKPTQ), and Lys224 each bind CTP. UTP-binding positions include 188–193 (KTKPTQ) and Lys224. The Glutamine amidotransferase type-1 domain occupies 292 to 534 (KVALVGKYIE…IKASQDKLTQ (243 aa)). Gly354 is a binding site for L-glutamine. The active-site Nucleophile; for glutamine hydrolysis is Cys381. Residues 382–385 (LGMQ), Glu405, and Arg462 contribute to the L-glutamine site. Residues His507 and Glu509 contribute to the active site.

Belongs to the CTP synthase family. Homotetramer.

It catalyses the reaction UTP + L-glutamine + ATP + H2O = CTP + L-glutamate + ADP + phosphate + 2 H(+). It carries out the reaction L-glutamine + H2O = L-glutamate + NH4(+). The enzyme catalyses UTP + NH4(+) + ATP = CTP + ADP + phosphate + 2 H(+). The protein operates within pyrimidine metabolism; CTP biosynthesis via de novo pathway; CTP from UDP: step 2/2. Allosterically activated by GTP, when glutamine is the substrate; GTP has no effect on the reaction when ammonia is the substrate. The allosteric effector GTP functions by stabilizing the protein conformation that binds the tetrahedral intermediate(s) formed during glutamine hydrolysis. Inhibited by the product CTP, via allosteric rather than competitive inhibition. Its function is as follows. Catalyzes the ATP-dependent amination of UTP to CTP with either L-glutamine or ammonia as the source of nitrogen. Regulates intracellular CTP levels through interactions with the four ribonucleotide triphosphates. The polypeptide is CTP synthase (Prochlorococcus marinus (strain AS9601)).